Here is a 109-residue protein sequence, read N- to C-terminus: MVIVYLAIACGFGALVRYFFSRYNQASKLPLGTLIANLLGCFLIGVFYNHVESKEVYAILATGFCGGLTTFSTLNDELQRLLSDKKVFYSYLILTYLGGLVAIFLGILL.

4 helical membrane-spanning segments follow: residues 1 to 21 (MVIV…YFFS), 29 to 49 (LPLG…VFYN), 55 to 75 (EVYA…STLN), and 87 to 107 (VFYS…FLGI). Na(+) contacts are provided by G66 and T69.

It belongs to the fluoride channel Fluc/FEX (TC 1.A.43) family.

It is found in the cell membrane. The enzyme catalyses fluoride(in) = fluoride(out). With respect to regulation, na(+) is not transported, but it plays an essential structural role and its presence is essential for fluoride channel function. Its function is as follows. Fluoride-specific ion channel. Important for reducing fluoride concentration in the cell, thus reducing its toxicity. This chain is Fluoride-specific ion channel FluC 1, found in Streptococcus pneumoniae (strain ATCC BAA-255 / R6).